The following is a 201-amino-acid chain: Alpha-1-acid glycoprotein (201 aa).

The signal sequence occupies residues 1–18; that stretch reads MALPWALAVLSLLPLLHA. Residues N25, N33, N87, N93, N103, and N169 are each glycosylated (N-linked (GlcNAc...) asparagine). C90 and C183 are joined by a disulfide.

The protein belongs to the calycin superfamily. Lipocalin family.

It is found in the secreted. Functions as a transport protein in the blood stream. Binds various ligands in the interior of its beta-barrel domain. Appears to function in modulating the activity of the immune system during the acute-phase reaction. This Oryctolagus cuniculus (Rabbit) protein is Alpha-1-acid glycoprotein (ORM1).